Here is a 158-residue protein sequence, read N- to C-terminus: 2-C-methyl-D-erythritol 2,4-cyclodiphosphate synthase (158 aa).

A divalent metal cation is bound by residues aspartate 9 and histidine 11. Residues 9-11 and 35-36 each bind 4-CDP-2-C-methyl-D-erythritol 2-phosphate; these read DVH and HS. Histidine 43 provides a ligand contact to a divalent metal cation. 4-CDP-2-C-methyl-D-erythritol 2-phosphate is bound by residues 57–59, 62–66, 101–107, 133–136, phenylalanine 140, and arginine 143; these read DIG, FPDTD, AQKPKMA, and TTTE.

Belongs to the IspF family. As to quaternary structure, homotrimer. Requires a divalent metal cation as cofactor.

The catalysed reaction is 4-CDP-2-C-methyl-D-erythritol 2-phosphate = 2-C-methyl-D-erythritol 2,4-cyclic diphosphate + CMP. It functions in the pathway isoprenoid biosynthesis; isopentenyl diphosphate biosynthesis via DXP pathway; isopentenyl diphosphate from 1-deoxy-D-xylulose 5-phosphate: step 4/6. Its function is as follows. Involved in the biosynthesis of isopentenyl diphosphate (IPP) and dimethylallyl diphosphate (DMAPP), two major building blocks of isoprenoid compounds. Catalyzes the conversion of 4-diphosphocytidyl-2-C-methyl-D-erythritol 2-phosphate (CDP-ME2P) to 2-C-methyl-D-erythritol 2,4-cyclodiphosphate (ME-CPP) with a corresponding release of cytidine 5-monophosphate (CMP). The chain is 2-C-methyl-D-erythritol 2,4-cyclodiphosphate synthase from Geobacillus sp. (strain WCH70).